We begin with the raw amino-acid sequence, 325 residues long: UPF0285 protein MmarC5_0962 (325 aa).

It belongs to the UPF0285 family.

The protein is UPF0285 protein MmarC5_0962 of Methanococcus maripaludis (strain C5 / ATCC BAA-1333).